Here is a 348-residue protein sequence, read N- to C-terminus: MGKDYYKILGIPSGANEDEIKKAYRKMALKYHPDKNKEPNAEEKFKEIAEAYDVLSDPKKRGLYDQYGEEGLKTGGGTSGGSSGSFHYTFHGDPHATFASFFGGSNPFDIFFASSRSTRPFSGFDPDDMDVDEDEDPFGAFGRFGFNGLSRGPRRAPEPLYPRRKVQDPPVVHELRVSLEEIYHGSTKRMKITRRRLNPDGRTVRTEDKILHIVIKRGWKEGTKITFPKEGDATPDNIPADIVFVLKDKPHAHFRRDGTNVLYSALISLKEALCGCTVNIPTIDGRVIPLPCNDVIKPGTVKRLRGEGLPFPKVPTQRGDLIVEFKVRFPDRLTPQTRQILKQHLPCS.

In terms of domain architecture, J spans 4-68; sequence DYYKILGIPS…KKRGLYDQYG (65 aa).

In Homo sapiens (Human), this protein is DnaJ homolog subfamily B member 5 (DNAJB5).